The chain runs to 274 residues: 3-methyl-2-oxobutanoate hydroxymethyltransferase (274 aa).

2 residues coordinate Mg(2+): D44 and D83. Residues 44-45 (DS), D83, and K113 contribute to the 3-methyl-2-oxobutanoate site. Residue E115 participates in Mg(2+) binding. E182 (proton acceptor) is an active-site residue.

Belongs to the PanB family. In terms of assembly, homodecamer; pentamer of dimers. Requires Mg(2+) as cofactor.

It localises to the cytoplasm. It catalyses the reaction 3-methyl-2-oxobutanoate + (6R)-5,10-methylene-5,6,7,8-tetrahydrofolate + H2O = 2-dehydropantoate + (6S)-5,6,7,8-tetrahydrofolate. It participates in cofactor biosynthesis; (R)-pantothenate biosynthesis; (R)-pantoate from 3-methyl-2-oxobutanoate: step 1/2. Its function is as follows. Catalyzes the reversible reaction in which hydroxymethyl group from 5,10-methylenetetrahydrofolate is transferred onto alpha-ketoisovalerate to form ketopantoate. The chain is 3-methyl-2-oxobutanoate hydroxymethyltransferase from Campylobacter jejuni subsp. jejuni serotype O:6 (strain 81116 / NCTC 11828).